The following is a 214-amino-acid chain: Nucleoplasmin-2 (214 aa).

The tract at residues 119 to 214 is disordered; the sequence is ERYEASDLTW…ARAKKPGFKK (96 aa). Over residues 127 to 155 the composition is skewed to acidic residues; the sequence is TWEEEEEEEGEEEEEEEEDDEDEDADISL. An acidic tract A2 region spans residues 129-152; it reads EEEEEEEGEEEEEEEEDDEDEDAD. A Bipartite nuclear localization signal motif is present at residues 165–180; the sequence is KRLVPQKQASVAKKKK. Positions 181–197 are enriched in basic and acidic residues; the sequence is LEKEEEEIRASVRDKSP. Residues 198–214 are compositionally biased toward basic residues; sequence VKKAKATARAKKPGFKK.

The protein belongs to the nucleoplasmin family. Homopentamer, when bound to H2A-H2B dimers only. Homodecamer of two stacked pentamers, when bound to H2A-H2B dimers and H3-H4 tetramers simultaneously.

Its subcellular location is the nucleus. Functionally, core histones chaperone involved in chromatin reprogramming, specially during fertilization and early embryonic development. Probably involved in sperm DNA decondensation during fertilization. The sequence is that of Nucleoplasmin-2 (NPM2) from Homo sapiens (Human).